A 338-amino-acid polypeptide reads, in one-letter code: Nicotinate-nucleotide--dimethylbenzimidazole phosphoribosyltransferase (338 aa).

Glu-305 functions as the Proton acceptor in the catalytic mechanism.

This sequence belongs to the CobT family.

The enzyme catalyses 5,6-dimethylbenzimidazole + nicotinate beta-D-ribonucleotide = alpha-ribazole 5'-phosphate + nicotinate + H(+). The protein operates within nucleoside biosynthesis; alpha-ribazole biosynthesis; alpha-ribazole from 5,6-dimethylbenzimidazole: step 1/2. Catalyzes the synthesis of alpha-ribazole-5'-phosphate from nicotinate mononucleotide (NAMN) and 5,6-dimethylbenzimidazole (DMB). The chain is Nicotinate-nucleotide--dimethylbenzimidazole phosphoribosyltransferase from Rhizobium etli (strain ATCC 51251 / DSM 11541 / JCM 21823 / NBRC 15573 / CFN 42).